The chain runs to 709 residues: Elongation factor G (709 aa).

One can recognise a tr-type G domain in the interval 9–296 (AKVRNIGIMA…AVVRYLPSPL (288 aa)). GTP is bound by residues 18-25 (AHIDAGKT), 86-90 (DTPGH), and 140-143 (NKLD).

It belongs to the TRAFAC class translation factor GTPase superfamily. Classic translation factor GTPase family. EF-G/EF-2 subfamily.

Its subcellular location is the cytoplasm. In terms of biological role, catalyzes the GTP-dependent ribosomal translocation step during translation elongation. During this step, the ribosome changes from the pre-translocational (PRE) to the post-translocational (POST) state as the newly formed A-site-bound peptidyl-tRNA and P-site-bound deacylated tRNA move to the P and E sites, respectively. Catalyzes the coordinated movement of the two tRNA molecules, the mRNA and conformational changes in the ribosome. The sequence is that of Elongation factor G from Streptomyces griseus subsp. griseus (strain JCM 4626 / CBS 651.72 / NBRC 13350 / KCC S-0626 / ISP 5235).